A 422-amino-acid polypeptide reads, in one-letter code: Biofilm regulator 1 (422 aa).

Composition is skewed to low complexity over residues 1 to 19 and 36 to 45; these read MSSS…TTSA and SGGSNNGNGS. Disordered stretches follow at residues 1 to 86 and 116 to 207; these read MSSS…KCPP and RLSS…PSHP. Over residues 46-61 the composition is skewed to polar residues; sequence ALKSQISPRLSDTSRI. 2 stretches are compositionally biased toward low complexity: residues 69–81 and 120–143; these read TSGS…SSTP and PTLP…LSPV. Residues 146-159 are compositionally biased toward polar residues; the sequence is VINTPPQQPQSVSA. Residues 160–194 show a composition bias toward low complexity; that stretch reads STSPNTQYQYYQYQQQSSPIQQQQQQQQATPAATP. The span at 195–205 shows a compositional bias: polar residues; the sequence is TVMQMAQNQPS. The GATA-type zinc-finger motif lies at 282–307; that stretch reads CHRCGTTETPEWRRGPKGVRTLCNAC.

Interacts with HDA1.

It localises to the nucleus. Transcription factor required for hyphal growth, biofilm formation, and virulence. Promotes formation of both conventional and pheromone-stimulated biofilms. Binds and recruits HDA1 to promoters of hypha-specific genes in a rapamycin-dependent manner. Involved in the switch between two heritable states, the white and opaque states. These two cell types differ in many characteristics, including cell structure, mating competence, and virulence. Each state is heritable for many generations, and switching between states occurs stochastically at low frequency. In Candida albicans (strain SC5314 / ATCC MYA-2876) (Yeast), this protein is Biofilm regulator 1 (BRG1).